The primary structure comprises 777 residues: MTVTIATLGFPRIGPKRELKFALEAYWAGKTDADALLDTARDLRAKTWTRQAALGVAHVPSNDFSLYDHVLDTAVMVGAIPAAYGWSGGTVDLATYFAMARGDQGRPAAEACGPGCGHAPGADGVPALEMTKWFDTNYHYLAPELSPGQAFALTSSKPVDEFLEAKALGVHTRPVLLGPVTFLKLAKTKAEGFSPLSLLSALLPVYGQVLRGLAAAGADWVQIDEPCLALDLTDFERAELRRAYGALTHAAPGVRLMLTSYFGGYGENLATAVNLPVEGLHLDLVRAPDELEAALAASRESLVLSLGVIDGRNVWRADLPALLDRLEPVVARRGSDRVVLAPSCSLLHTPIDLDLETALDPEIRQWLAFAVQKVEALAVLAQALNGGRASVAAALEASAQAARARATSPRIHDPKVAERLAAVTPDMTRRRSPYDQRREAQRARLNLPPLPTTTIGSFPQTTEVRQARAAFAKGQISDATYEAFLRQETARAVAWQETVGLDVLVHGEFERNDMVQYFGEQLAGFAFTQSGWVQSYGSRCVRPPILFGDVSRPAPMTVDWWRYAQGLTRRPMKGMLTGPVTILNWSFVRDDLPRETACRQIALAIRDEVVDLEATGAAIIQIDEAALREGLPLRRGDWDAYLDWAVESFRLAASGVADATQIHTHMCYSEFNDIIAAIGAMDADVISIETARSKMELLDAFVGYAYPAQIGPGVYDIHSPRVPAVEEMTTLLAAARQRLAGEQLWVNPDCGLKTRKWPETQAAIVNMVEAARRARAS.

5-methyltetrahydropteroyltri-L-glutamate is bound by residues 17–20 (RELK) and Lys-132. L-homocysteine is bound by residues 455 to 457 (IGS) and Glu-508. L-methionine-binding positions include 455 to 457 (IGS) and Glu-508. Residues 539–540 (RC) and Trp-585 each bind 5-methyltetrahydropteroyltri-L-glutamate. Residue Asp-623 participates in L-homocysteine binding. Asp-623 is a binding site for L-methionine. Residue Glu-629 coordinates 5-methyltetrahydropteroyltri-L-glutamate. Zn(2+)-binding residues include His-665, Cys-667, and Glu-689. The active-site Proton donor is His-718. Position 750 (Cys-750) interacts with Zn(2+).

It belongs to the vitamin-B12 independent methionine synthase family. Zn(2+) serves as cofactor.

The catalysed reaction is 5-methyltetrahydropteroyltri-L-glutamate + L-homocysteine = tetrahydropteroyltri-L-glutamate + L-methionine. Its pathway is amino-acid biosynthesis; L-methionine biosynthesis via de novo pathway; L-methionine from L-homocysteine (MetE route): step 1/1. Catalyzes the transfer of a methyl group from 5-methyltetrahydrofolate to homocysteine resulting in methionine formation. The chain is 5-methyltetrahydropteroyltriglutamate--homocysteine methyltransferase from Caulobacter vibrioides (strain ATCC 19089 / CIP 103742 / CB 15) (Caulobacter crescentus).